A 648-amino-acid chain; its full sequence is 1-deoxy-D-xylulose-5-phosphate synthase (648 aa).

Thiamine diphosphate-binding positions include histidine 72 and 113 to 115; that span reads GHA. Residue aspartate 144 coordinates Mg(2+). Thiamine diphosphate-binding positions include 145 to 146, asparagine 173, and glutamate 363; that span reads GA. Residue asparagine 173 coordinates Mg(2+).

Belongs to the transketolase family. DXPS subfamily. As to quaternary structure, homodimer. It depends on Mg(2+) as a cofactor. Thiamine diphosphate serves as cofactor.

The enzyme catalyses D-glyceraldehyde 3-phosphate + pyruvate + H(+) = 1-deoxy-D-xylulose 5-phosphate + CO2. Its pathway is metabolic intermediate biosynthesis; 1-deoxy-D-xylulose 5-phosphate biosynthesis; 1-deoxy-D-xylulose 5-phosphate from D-glyceraldehyde 3-phosphate and pyruvate: step 1/1. Its function is as follows. Catalyzes the acyloin condensation reaction between C atoms 2 and 3 of pyruvate and glyceraldehyde 3-phosphate to yield 1-deoxy-D-xylulose-5-phosphate (DXP). The chain is 1-deoxy-D-xylulose-5-phosphate synthase from Symbiobacterium thermophilum (strain DSM 24528 / JCM 14929 / IAM 14863 / T).